The following is a 300-amino-acid chain: 4-hydroxy-tetrahydrodipicolinate synthase (300 aa).

Threonine 54 is a binding site for pyruvate. The Proton donor/acceptor role is filled by tyrosine 142. Lysine 170 serves as the catalytic Schiff-base intermediate with substrate. Residue isoleucine 212 coordinates pyruvate.

Belongs to the DapA family. In terms of assembly, homotetramer; dimer of dimers.

It is found in the cytoplasm. The catalysed reaction is L-aspartate 4-semialdehyde + pyruvate = (2S,4S)-4-hydroxy-2,3,4,5-tetrahydrodipicolinate + H2O + H(+). It functions in the pathway amino-acid biosynthesis; L-lysine biosynthesis via DAP pathway; (S)-tetrahydrodipicolinate from L-aspartate: step 3/4. Functionally, catalyzes the condensation of (S)-aspartate-beta-semialdehyde [(S)-ASA] and pyruvate to 4-hydroxy-tetrahydrodipicolinate (HTPA). The chain is 4-hydroxy-tetrahydrodipicolinate synthase from Halorhodospira halophila (strain DSM 244 / SL1) (Ectothiorhodospira halophila (strain DSM 244 / SL1)).